The primary structure comprises 292 residues: Protease HtpX (292 aa).

Transmembrane regions (helical) follow at residues 4 to 24 (IVLFLLTNLAVMLIFSLILFL) and 32 to 52 (IYGLLIMSGLFGFSGSILSLI). His139 is a Zn(2+) binding site. Glu140 is a catalytic residue. Residue His143 participates in Zn(2+) binding. 2 helical membrane-spanning segments follow: residues 147–167 (GDMITMTLVQGVVNTFVIFIS) and 193–213 (FVYFLVSTFLELIFGILASII). A Zn(2+)-binding site is contributed by Glu222.

Belongs to the peptidase M48B family. It depends on Zn(2+) as a cofactor.

Its subcellular location is the cell membrane. The polypeptide is Protease HtpX (Buchnera aphidicola subsp. Acyrthosiphon pisum (strain 5A)).